Consider the following 73-residue polypeptide: Myosin-IB light chain (73 aa).

2 EF-hand domains span residues 3–38 (DEKT…GLPM) and 38–73 (MTEA…VDES). Residues Asp16, Asp18, Asp20, and Glu27 each contribute to the Ca(2+) site.

As to quaternary structure, myosin I is a dimer of a heavy and a light chain. Inability to self-assemble into filaments. Interacts with myoB. Does not interact with myoC or myoD.

Functionally, functions as the light chain for myosin-B. Binds calcium with submicromolar affinity and may sense physiological calcium changes. This Dictyostelium discoideum (Social amoeba) protein is Myosin-IB light chain (mlcB).